Reading from the N-terminus, the 141-residue chain is Flagellar assembly factor FliW (141 aa).

It belongs to the FliW family. In terms of assembly, interacts with translational regulator CsrA and flagellin(s).

It localises to the cytoplasm. In terms of biological role, acts as an anti-CsrA protein, binds CsrA and prevents it from repressing translation of its target genes, one of which is flagellin. Binds to flagellin and participates in the assembly of the flagellum. This is Flagellar assembly factor FliW from Clostridium acetobutylicum (strain ATCC 824 / DSM 792 / JCM 1419 / IAM 19013 / LMG 5710 / NBRC 13948 / NRRL B-527 / VKM B-1787 / 2291 / W).